The following is a 691-amino-acid chain: Threonine--tRNA ligase (691 aa).

In terms of domain architecture, TGS spans 1–66 (MSAPARPAPA…DADVDVIPVT (66 aa)). The catalytic stretch occupies residues 265–571 (DHRKLGVELD…LTEHYAGAFP (307 aa)). Zn(2+) contacts are provided by Cys370, His421, and His548.

Belongs to the class-II aminoacyl-tRNA synthetase family. As to quaternary structure, homodimer. Zn(2+) serves as cofactor.

It localises to the cytoplasm. It catalyses the reaction tRNA(Thr) + L-threonine + ATP = L-threonyl-tRNA(Thr) + AMP + diphosphate + H(+). Functionally, catalyzes the attachment of threonine to tRNA(Thr) in a two-step reaction: L-threonine is first activated by ATP to form Thr-AMP and then transferred to the acceptor end of tRNA(Thr). Also edits incorrectly charged L-seryl-tRNA(Thr). This Mycolicibacterium vanbaalenii (strain DSM 7251 / JCM 13017 / BCRC 16820 / KCTC 9966 / NRRL B-24157 / PYR-1) (Mycobacterium vanbaalenii) protein is Threonine--tRNA ligase.